We begin with the raw amino-acid sequence, 530 residues long: Phosphoenolpyruvate carboxykinase (ATP) (530 aa).

Residues Arg-60, Tyr-195, and Lys-201 each contribute to the substrate site. Residues Lys-201, His-221, and Gly-237–Thr-245 contribute to the ATP site. Mn(2+) is bound by residues Lys-201 and His-221. Asp-258 provides a ligand contact to Mn(2+). Residues Glu-286, Arg-324, and Ser-449 each coordinate ATP. Arg-324 serves as a coordination point for substrate.

Belongs to the phosphoenolpyruvate carboxykinase (ATP) family. Mn(2+) serves as cofactor.

The protein resides in the cytoplasm. It catalyses the reaction oxaloacetate + ATP = phosphoenolpyruvate + ADP + CO2. Its pathway is carbohydrate biosynthesis; gluconeogenesis. Involved in the gluconeogenesis. Catalyzes the conversion of oxaloacetate (OAA) to phosphoenolpyruvate (PEP) through direct phosphoryl transfer between the nucleoside triphosphate and OAA. The protein is Phosphoenolpyruvate carboxykinase (ATP) of Geotalea uraniireducens (strain Rf4) (Geobacter uraniireducens).